The following is a 158-amino-acid chain: NKG2-F type II integral membrane protein (158 aa).

Residues 1-12 (MNKQRGTYSEVS) show a composition bias toward polar residues. The disordered stretch occupies residues 1-30 (MNKQRGTYSEVSLAQDPKRQQRKLKGNKSS). Residues 1–74 (MNKQRGTYSE…LPPPERLTAE (74 aa)) lie on the Cytoplasmic side of the membrane. The helical transmembrane segment at 75–95 (VLGIICIVLMATVLKTIVLIP) threads the bilayer. Topologically, residues 96-158 (CIGVLEQNNF…VLQRTLICFL (63 aa)) are extracellular.

As to quaternary structure, can form disulfide-bonded heterodimer with CD94. Natural killer cells.

The protein resides in the membrane. May play a role as a receptor for the recognition of MHC class I HLA-E molecules by NK cells. The chain is NKG2-F type II integral membrane protein (KLRC4) from Pan troglodytes (Chimpanzee).